A 945-amino-acid chain; its full sequence is Isoleucine--tRNA ligase (945 aa).

A 'HIGH' region motif is present at residues 66 to 76; the sequence is PYANGDIHLGH. E581 is an L-isoleucyl-5'-AMP binding site. Residues 622–626 carry the 'KMSKS' region motif; the sequence is KMSKS. An ATP-binding site is contributed by K625. Zn(2+) is bound by residues C908, C911, C928, and C931.

It belongs to the class-I aminoacyl-tRNA synthetase family. IleS type 1 subfamily. As to quaternary structure, monomer. Zn(2+) is required as a cofactor.

Its subcellular location is the cytoplasm. The catalysed reaction is tRNA(Ile) + L-isoleucine + ATP = L-isoleucyl-tRNA(Ile) + AMP + diphosphate. In terms of biological role, catalyzes the attachment of isoleucine to tRNA(Ile). As IleRS can inadvertently accommodate and process structurally similar amino acids such as valine, to avoid such errors it has two additional distinct tRNA(Ile)-dependent editing activities. One activity is designated as 'pretransfer' editing and involves the hydrolysis of activated Val-AMP. The other activity is designated 'posttransfer' editing and involves deacylation of mischarged Val-tRNA(Ile). The sequence is that of Isoleucine--tRNA ligase from Burkholderia ambifaria (strain ATCC BAA-244 / DSM 16087 / CCUG 44356 / LMG 19182 / AMMD) (Burkholderia cepacia (strain AMMD)).